Here is a 484-residue protein sequence, read N- to C-terminus: Protein nucleotidyltransferase YdiU (484 aa).

The ATP site is built by Gly81, Gly83, Arg84, Lys103, Asp115, Gly116, Arg166, and Arg173. The Proton acceptor role is filled by Asp244. The Mg(2+) site is built by Asn245 and Asp254. Asp254 is a binding site for ATP.

This sequence belongs to the SELO family. Mg(2+) serves as cofactor. It depends on Mn(2+) as a cofactor.

It catalyses the reaction L-seryl-[protein] + ATP = 3-O-(5'-adenylyl)-L-seryl-[protein] + diphosphate. It carries out the reaction L-threonyl-[protein] + ATP = 3-O-(5'-adenylyl)-L-threonyl-[protein] + diphosphate. The enzyme catalyses L-tyrosyl-[protein] + ATP = O-(5'-adenylyl)-L-tyrosyl-[protein] + diphosphate. The catalysed reaction is L-histidyl-[protein] + UTP = N(tele)-(5'-uridylyl)-L-histidyl-[protein] + diphosphate. It catalyses the reaction L-seryl-[protein] + UTP = O-(5'-uridylyl)-L-seryl-[protein] + diphosphate. It carries out the reaction L-tyrosyl-[protein] + UTP = O-(5'-uridylyl)-L-tyrosyl-[protein] + diphosphate. Its function is as follows. Nucleotidyltransferase involved in the post-translational modification of proteins. It can catalyze the addition of adenosine monophosphate (AMP) or uridine monophosphate (UMP) to a protein, resulting in modifications known as AMPylation and UMPylation. This chain is Protein nucleotidyltransferase YdiU, found in Shewanella loihica (strain ATCC BAA-1088 / PV-4).